We begin with the raw amino-acid sequence, 40 residues long: Photosystem II reaction center protein J (40 aa).

A helical membrane pass occupies residues 10–30; that stretch reads LWLVGTVAGTLVIGLLGVFFY.

Belongs to the PsbJ family. As to quaternary structure, PSII is composed of 1 copy each of membrane proteins PsbA, PsbB, PsbC, PsbD, PsbE, PsbF, PsbH, PsbI, PsbJ, PsbK, PsbL, PsbM, PsbT, PsbX, PsbY, PsbZ, Psb30/Ycf12, at least 3 peripheral proteins of the oxygen-evolving complex and a large number of cofactors. It forms dimeric complexes.

It is found in the plastid. Its subcellular location is the chloroplast thylakoid membrane. In terms of biological role, one of the components of the core complex of photosystem II (PSII). PSII is a light-driven water:plastoquinone oxidoreductase that uses light energy to abstract electrons from H(2)O, generating O(2) and a proton gradient subsequently used for ATP formation. It consists of a core antenna complex that captures photons, and an electron transfer chain that converts photonic excitation into a charge separation. This is Photosystem II reaction center protein J from Adiantum capillus-veneris (Maidenhair fern).